Here is a 409-residue protein sequence, read N- to C-terminus: Microfibrillar-associated protein 3-like (409 aa).

A signal peptide spans 1–28 (MDRLKSHLTVCFLPSVPFLILVSTLATA). Residues 29–149 (KSVTNSTLNG…LRVIFTSGDM (121 aa)) lie on the Extracellular side of the membrane. N-linked (GlcNAc...) asparagine glycans are attached at residues N33, N37, N67, N111, and N135. The region spanning 47–141 (PVIIARTDHI…GTVNNTVTLR (95 aa)) is the Ig-like C2-type domain. C68 and C125 are disulfide-bonded. A helical transmembrane segment spans residues 150–172 (GVYYMVVCLVAFTIVMVLNITRL). Residues 173-409 (CMMSSHLKKT…NTCIIYESHV (237 aa)) lie on the Cytoplasmic side of the membrane. Position 287 is a phosphotyrosine; by EGFR (Y287). Disordered regions lie at residues 292-311 (SLKR…LHEQ) and 320-385 (SVHP…VLPP). S298, S303, S306, and S307 each carry phosphoserine. Positions 339 to 355 (EVKDVEETELSAEHSPE) are enriched in basic and acidic residues. Over residues 363 to 377 (VTSTELTSEEPTPVE) the composition is skewed to low complexity.

In terms of tissue distribution, highly expressed in testis.

Its subcellular location is the cell membrane. It localises to the nucleus. The protein localises to the cytoplasm. May participate in the nuclear signaling of EGFR and MAPK1/ERK2. May a have a role in metastasis. The chain is Microfibrillar-associated protein 3-like (MFAP3L) from Homo sapiens (Human).